Here is a 192-residue protein sequence, read N- to C-terminus: Ion-translocating oxidoreductase complex subunit A (192 aa).

The next 6 membrane-spanning stretches (helical) occupy residues 5-25 (ILLI…FLGL), 39-59 (IGMS…AYLI), 63-83 (ILTP…VIAV), 102-122 (LLGI…VALL), 134-154 (VIYG…FAAL), and 171-191 (SIAL…TGLV).

It belongs to the NqrDE/RnfAE family. As to quaternary structure, the complex is composed of six subunits: RnfA, RnfB, RnfC, RnfD, RnfE and RnfG.

It is found in the cell inner membrane. Functionally, part of a membrane-bound complex that couples electron transfer with translocation of ions across the membrane. The protein is Ion-translocating oxidoreductase complex subunit A of Pasteurella multocida (strain Pm70).